The primary structure comprises 141 residues: HTH-type transcriptional repressor NsrR (141 aa).

The HTH rrf2-type domain maps to 2–129; it reads QLTSFTDYGL…DNYTLADLVE (128 aa). The H-T-H motif DNA-binding region spans 28-51; the sequence is ISQVTEVYGVSRNHMVKIINQLSR. [2Fe-2S] cluster-binding residues include Cys-91, Cys-96, and Cys-102.

The cofactor is [2Fe-2S] cluster.

Functionally, nitric oxide-sensitive repressor of genes involved in protecting the cell against nitrosative stress. May require iron for activity. The protein is HTH-type transcriptional repressor NsrR of Enterobacter sp. (strain 638).